The following is a 91-amino-acid chain: DNA-directed RNA polymerase subunit omega (91 aa).

It belongs to the RNA polymerase subunit omega family. As to quaternary structure, the RNAP catalytic core consists of 2 alpha, 1 beta, 1 beta' and 1 omega subunit. When a sigma factor is associated with the core the holoenzyme is formed, which can initiate transcription.

The catalysed reaction is RNA(n) + a ribonucleoside 5'-triphosphate = RNA(n+1) + diphosphate. Functionally, promotes RNA polymerase assembly. Latches the N- and C-terminal regions of the beta' subunit thereby facilitating its interaction with the beta and alpha subunits. This is DNA-directed RNA polymerase subunit omega from Aeromonas hydrophila subsp. hydrophila (strain ATCC 7966 / DSM 30187 / BCRC 13018 / CCUG 14551 / JCM 1027 / KCTC 2358 / NCIMB 9240 / NCTC 8049).